The following is a 143-amino-acid chain: Putative pre-16S rRNA nuclease (143 aa).

The protein belongs to the YqgF nuclease family.

The protein localises to the cytoplasm. Functionally, could be a nuclease involved in processing of the 5'-end of pre-16S rRNA. This chain is Putative pre-16S rRNA nuclease, found in Agathobacter rectalis (strain ATCC 33656 / DSM 3377 / JCM 17463 / KCTC 5835 / VPI 0990) (Eubacterium rectale).